Reading from the N-terminus, the 167-residue chain is Transcriptional regulator MraZ (167 aa).

2 SpoVT-AbrB domains span residues 8-51 (ESHH…YGDH) and 92-135 (SLPT…KPET).

The protein belongs to the MraZ family. Forms oligomers.

The protein resides in the cytoplasm. It localises to the nucleoid. The protein is Transcriptional regulator MraZ of Ruegeria sp. (strain TM1040) (Silicibacter sp.).